A 512-amino-acid chain; its full sequence is Dihydroniloticin synthase CYP71CD2 (512 aa).

The chain crosses the membrane as a helical span at residues 1 to 21; sequence MNLQLDYFSITSFLVFLVVLF. N436 is a binding site for heme.

It belongs to the cytochrome P450 family. Heme is required as a cofactor. Mainly expressed in petioles and roots, and, to a lower extent, in leaves.

Its subcellular location is the membrane. The catalysed reaction is tirucalla-7,24-dien-3beta-ol + 2 reduced [NADPH--hemoprotein reductase] + 2 O2 = dihydroniloticin + 2 oxidized [NADPH--hemoprotein reductase] + 2 H2O + 2 H(+). It participates in secondary metabolite biosynthesis; terpenoid biosynthesis. Monooxygenase involved in the biosynthesis of limonoids triterpene natural products such as azadirachtin, an antifeedant widely used as bioinsecticide, and possessing many medicinal applications including anti-tumoral, anti-malarial, anti-rheumatic, antibacterial, anti-inflammatory, anti-pyretic and diuretic effects. Catalyzes the conversion of tirucalladienol to dihydroniloticin. This chain is Dihydroniloticin synthase CYP71CD2, found in Melia azedarach (Chinaberry tree).